We begin with the raw amino-acid sequence, 383 residues long: Galactokinase (383 aa).

E34–D37 contributes to the substrate binding site. G124 to S130 is an ATP binding site. Residues S130 and E162 each contribute to the Mg(2+) site. The active-site Proton acceptor is D174. Y223 is a binding site for substrate.

This sequence belongs to the GHMP kinase family. GalK subfamily.

Its subcellular location is the cytoplasm. It carries out the reaction alpha-D-galactose + ATP = alpha-D-galactose 1-phosphate + ADP + H(+). The protein operates within carbohydrate metabolism; galactose metabolism. Its function is as follows. Catalyzes the transfer of the gamma-phosphate of ATP to D-galactose to form alpha-D-galactose-1-phosphate (Gal-1-P). The protein is Galactokinase of Yersinia enterocolitica serotype O:8 / biotype 1B (strain NCTC 13174 / 8081).